The chain runs to 546 residues: E3 ubiquitin-protein ligase NEURL1B (546 aa).

One can recognise an NHR 1 domain in the interval 38–194 (APRFHAQAKG…ITDEVQLLES (157 aa)). The residue at position 199 (threonine 199) is a Phosphothreonine. An NHR 2 domain is found at 270–424 (ELRFHATRGP…GVAGQLRLLG (155 aa)). The interval 429–490 (SSETMTPSGS…FSAPEPTGSR (62 aa)) is disordered. The span at 457–471 (SSSASESSLVTAPSS) shows a compositional bias: low complexity. An RING-type zinc finger spans residues 494 to 534 (CTVCFDSEVDTVIYTCGHMCLCHGCGLRLRRQARACCPICR).

As to quaternary structure, interacts with DLL1 and DLL4. In terms of tissue distribution, expressed in the limb buds and dorsal root ganglia. Expressed in brain and kidney and at low levels in the heart.

The protein localises to the cytoplasm. It catalyses the reaction S-ubiquitinyl-[E2 ubiquitin-conjugating enzyme]-L-cysteine + [acceptor protein]-L-lysine = [E2 ubiquitin-conjugating enzyme]-L-cysteine + N(6)-ubiquitinyl-[acceptor protein]-L-lysine.. Its pathway is protein modification; protein ubiquitination. In terms of biological role, E3 ubiquitin-protein ligase involved in regulation of the Notch pathway through influencing the stability and activity of several Notch ligands. The protein is E3 ubiquitin-protein ligase NEURL1B (Neurl1b) of Mus musculus (Mouse).